Consider the following 282-residue polypeptide: Structure-specific endonuclease subunit slx1 (282 aa).

The GIY-YIG domain occupies 7 to 97 (GFYGVYLLFC…RLTHVPRKTK (91 aa)). The SLX1-type zinc-finger motif lies at 191 to 243 (CRVCYERVQDKDDSLHCFHPGCTLTAHIMCLAKLFLLNEPQNLIPVEGLCPSC).

It belongs to the SLX1 family. As to quaternary structure, forms a heterodimer with slx4. The cofactor is a divalent metal cation.

Its subcellular location is the nucleus. Catalytic subunit of the slx1-slx4 structure-specific endonuclease that resolves DNA secondary structures generated during DNA repair and recombination. Has endonuclease activity towards branched DNA substrates, introducing single-strand cuts in duplex DNA close to junctions with ss-DNA. The protein is Structure-specific endonuclease subunit slx1 (slx1a) of Xenopus laevis (African clawed frog).